The primary structure comprises 102 residues: MAKIGNIEHVEERVESELMPPSMYKVVLNNDDYTPMDFVIEVLQVFFRKNEQEATDIMLTIHHQGKGICGIFPFGIAETKVIQVNQFARQNQHPLLCSLEKA.

This sequence belongs to the ClpS family. In terms of assembly, binds to the N-terminal domain of the chaperone ClpA.

Functionally, involved in the modulation of the specificity of the ClpAP-mediated ATP-dependent protein degradation. This is ATP-dependent Clp protease adapter protein ClpS from Shewanella baltica (strain OS155 / ATCC BAA-1091).